We begin with the raw amino-acid sequence, 175 residues long: MMTYIVFILSIIFVVSFVGFSSKPSPIYGGLVLIISGAVGCGIVLSFGGSFLGLMVFLIYLGGMLVVFGYTTAMAIEQYPEVWVSNKAVLGAFVMGLLSELLLACYILKDDEVDVVFEFNGMGDWVIYDTGDSGFFSEEAMGIAALYSYGTWLVIVTGWSLLTGVLVIMEVTRGN.

5 consecutive transmembrane segments (helical) span residues 1–21, 25–45, 47–67, 88–108, and 149–169; these read MMTY…VGFS, SPIY…GIVL, FGGS…MLVV, AVLG…CYIL, and YGTW…LVIM.

The protein belongs to the complex I subunit 6 family. Core subunit of respiratory chain NADH dehydrogenase (Complex I) which is composed of 45 different subunits.

It is found in the mitochondrion inner membrane. The catalysed reaction is a ubiquinone + NADH + 5 H(+)(in) = a ubiquinol + NAD(+) + 4 H(+)(out). Its function is as follows. Core subunit of the mitochondrial membrane respiratory chain NADH dehydrogenase (Complex I) which catalyzes electron transfer from NADH through the respiratory chain, using ubiquinone as an electron acceptor. Essential for the catalytic activity and assembly of complex I. The polypeptide is NADH-ubiquinone oxidoreductase chain 6 (MT-ND6) (Phoca vitulina (Harbor seal)).